A 319-amino-acid chain; its full sequence is 1-aminocyclopropane-1-carboxylate oxidase 4 (319 aa).

Residues 153–253 (PNFGTKVSNY…RMSLASFYNP (101 aa)) enclose the Fe2OG dioxygenase domain. Fe cation contacts are provided by H177, D179, and H234.

The protein belongs to the iron/ascorbate-dependent oxidoreductase family. It depends on Fe cation as a cofactor.

The enzyme catalyses 1-aminocyclopropane-1-carboxylate + L-ascorbate + O2 = ethene + L-dehydroascorbate + hydrogen cyanide + CO2 + 2 H2O. The protein operates within alkene biosynthesis; ethylene biosynthesis via S-adenosyl-L-methionine; ethylene from S-adenosyl-L-methionine: step 2/2. In Petunia hybrida (Petunia), this protein is 1-aminocyclopropane-1-carboxylate oxidase 4 (ACO4).